We begin with the raw amino-acid sequence, 234 residues long: MIFIPPFEQGKLLRRYKRFLADVLLDDGTEITIHCPNTGSMRNCLFPGERVWFSTSDNPKRKYAHTWEQAASDEGHIIGINTGRANALAAEAIEAGVISELTGYDRLRREVKYGSENSRIDLLLESEDKPACYIEVKSCTLLEQGQGYFPDAVTTRGQKHLRELMEMVKQGHRAVLLFVVQHTGITTVAAARHIDPEYAELLTQAHQAGVEILAYSCELSPSAAKLIKSCPVKL.

The protein belongs to the SfsA family.

The protein is Sugar fermentation stimulation protein homolog of Shewanella loihica (strain ATCC BAA-1088 / PV-4).